We begin with the raw amino-acid sequence, 156 residues long: Small ribosomal subunit protein uS7 (156 aa).

Belongs to the universal ribosomal protein uS7 family. Part of the 30S ribosomal subunit. Contacts proteins S9 and S11.

In terms of biological role, one of the primary rRNA binding proteins, it binds directly to 16S rRNA where it nucleates assembly of the head domain of the 30S subunit. Is located at the subunit interface close to the decoding center, probably blocks exit of the E-site tRNA. The protein is Small ribosomal subunit protein uS7 of Rhodobacter capsulatus (Rhodopseudomonas capsulata).